Consider the following 94-residue polypeptide: Co-chaperonin GroES (94 aa).

It belongs to the GroES chaperonin family. Heptamer of 7 subunits arranged in a ring. Interacts with the chaperonin GroEL.

The protein resides in the cytoplasm. In terms of biological role, together with the chaperonin GroEL, plays an essential role in assisting protein folding. The GroEL-GroES system forms a nano-cage that allows encapsulation of the non-native substrate proteins and provides a physical environment optimized to promote and accelerate protein folding. GroES binds to the apical surface of the GroEL ring, thereby capping the opening of the GroEL channel. The sequence is that of Co-chaperonin GroES from Clostridium perfringens (strain SM101 / Type A).